Consider the following 503-residue polypeptide: ATP synthase subunit alpha (503 aa).

169-176 contributes to the ATP binding site; it reads GDRKTGKT.

This sequence belongs to the ATPase alpha/beta chains family. In terms of assembly, F-type ATPases have 2 components, CF(1) - the catalytic core - and CF(0) - the membrane proton channel. CF(1) has five subunits: alpha(3), beta(3), gamma(1), delta(1), epsilon(1). CF(0) has three main subunits: a(1), b(2) and c(9-12). The alpha and beta chains form an alternating ring which encloses part of the gamma chain. CF(1) is attached to CF(0) by a central stalk formed by the gamma and epsilon chains, while a peripheral stalk is formed by the delta and b chains.

It localises to the cell membrane. The enzyme catalyses ATP + H2O + 4 H(+)(in) = ADP + phosphate + 5 H(+)(out). Its activity is regulated as follows. Increases 2-fold following exposure to low pH. Its function is as follows. Produces ATP from ADP in the presence of a proton gradient across the membrane. The alpha chain is a regulatory subunit. The sequence is that of ATP synthase subunit alpha from Lactobacillus acidophilus (strain ATCC 700396 / NCK56 / N2 / NCFM).